A 254-amino-acid chain; its full sequence is 3-deoxy-manno-octulosonate cytidylyltransferase (254 aa).

It belongs to the KdsB family.

The protein localises to the cytoplasm. It carries out the reaction 3-deoxy-alpha-D-manno-oct-2-ulosonate + CTP = CMP-3-deoxy-beta-D-manno-octulosonate + diphosphate. Its pathway is nucleotide-sugar biosynthesis; CMP-3-deoxy-D-manno-octulosonate biosynthesis; CMP-3-deoxy-D-manno-octulosonate from 3-deoxy-D-manno-octulosonate and CTP: step 1/1. It participates in bacterial outer membrane biogenesis; lipopolysaccharide biosynthesis. Its function is as follows. Activates KDO (a required 8-carbon sugar) for incorporation into bacterial lipopolysaccharide in Gram-negative bacteria. The chain is 3-deoxy-manno-octulosonate cytidylyltransferase from Pseudomonas putida (strain W619).